The sequence spans 98 residues: Putative pterin-4-alpha-carbinolamine dehydratase (98 aa).

Belongs to the pterin-4-alpha-carbinolamine dehydratase family.

It carries out the reaction (4aS,6R)-4a-hydroxy-L-erythro-5,6,7,8-tetrahydrobiopterin = (6R)-L-erythro-6,7-dihydrobiopterin + H2O. The protein is Putative pterin-4-alpha-carbinolamine dehydratase of Parasynechococcus marenigrum (strain WH8102).